We begin with the raw amino-acid sequence, 161 residues long: UPF0262 protein SPOA0072 (161 aa).

The tract at residues 1 to 21 is disordered; the sequence is MTMSRISHIELDDSNLPPPTP.

The protein belongs to the UPF0262 family.

In Ruegeria pomeroyi (strain ATCC 700808 / DSM 15171 / DSS-3) (Silicibacter pomeroyi), this protein is UPF0262 protein SPOA0072.